Reading from the N-terminus, the 908-residue chain is Flap endonuclease GEN homolog 1 (908 aa).

The segment at 2-96 is XPG-N domain; sequence GVNDLWQILE…SKRNQSRYGS (95 aa). Mg(2+) is bound by residues Asp30, Glu75, Glu134, Glu136, Asp155, Asp157, and Asp208. The interval 122–208 is XPG-I domain; it reads ECLGIPWVQA…VGLAILLGCD (87 aa). The tract at residues 208–384 is 5'-3' exonuclease domain; it reads DYLPKGVPGV…LLVLLTHYDM (177 aa). The segment at 390–464 is chromodomain; it reads GSRNSNQLQP…VYQKQKLEIK (75 aa). Phosphoserine is present on residues Ser801 and Ser802.

The protein belongs to the XPG/RAD2 endonuclease family. GEN subfamily. As to quaternary structure, largely monomeric, dimerizes on the Holliday junction and the first nick occurs upon dimerization at the junction. It depends on Mg(2+) as a cofactor.

It is found in the nucleus. Functionally, endonuclease which resolves Holliday junctions (HJs) by the introduction of symmetrically related cuts across the junction point, to produce nicked duplex products in which the nicks can be readily ligated. Four-way DNA intermediates, also known as Holliday junctions, are formed during homologous recombination and DNA repair, and their resolution is necessary for proper chromosome segregation. Cleaves HJs by a nick and counter-nick mechanism involving dual coordinated incisions that lead to the formation of ligatable nicked duplex products. Cleavage of the first strand is rate limiting, while second strand cleavage is rapid. Largely monomeric, dimerizes on the HJ and the first nick occurs upon dimerization at the junction. Efficiently cleaves both single and double HJs contained within large recombination intermediates. Exhibits a weak sequence preference for incision between two G residues that reside in a T-rich region of DNA. Also has endonuclease activity on 5'-flap and replication fork (RF) DNA substrates. This chain is Flap endonuclease GEN homolog 1 (GEN1), found in Homo sapiens (Human).